A 403-amino-acid chain; its full sequence is L-lactate oxidase (403 aa).

Positions 21-375 (EGSVDFVNVF…KHFKLRHNPY (355 aa)) constitute an FMN hydroxy acid dehydrogenase domain. Residue Tyr47 coordinates pyruvate. FMN is bound by residues 99–101 (PVA), Ser128, and Gln150. Tyr152 is a pyruvate binding site. Residue Thr178 participates in FMN binding. Pyruvate contacts are provided by Arg187 and Tyr220. Residue Lys246 coordinates FMN. Pyruvate is bound by residues His270 and Arg273. The active-site Proton acceptor is His270. FMN is bound by residues 301–305 (DSGVR) and Arg325.

It belongs to the FMN-dependent alpha-hydroxy acid dehydrogenase family. Homotetramer. It depends on FMN as a cofactor.

It carries out the reaction (S)-lactate + O2 = pyruvate + H2O2. Functionally, catalyzes the oxidation of (S)-lactate (L-lactate) to pyruvate, with a reduction of O2 to H2O2. Is likely involved in the L-lactate aerobic metabolism of S.iniae that enables the bacterium to utilize L-lactate as an energy source for growth under aerobic conditions in the absence (or at low concentrations) of glucose. The protein is L-lactate oxidase of Streptococcus iniae (Streptococcus shiloi).